A 247-amino-acid chain; its full sequence is 23S rRNA (guanosine-2'-O-)-methyltransferase RlmB (247 aa).

Glycine 197, isoleucine 217, and leucine 226 together coordinate S-adenosyl-L-methionine.

This sequence belongs to the class IV-like SAM-binding methyltransferase superfamily. RNA methyltransferase TrmH family. RlmB subfamily.

The protein localises to the cytoplasm. The catalysed reaction is guanosine(2251) in 23S rRNA + S-adenosyl-L-methionine = 2'-O-methylguanosine(2251) in 23S rRNA + S-adenosyl-L-homocysteine + H(+). Functionally, specifically methylates the ribose of guanosine 2251 in 23S rRNA. This Vibrio cholerae serotype O1 (strain ATCC 39315 / El Tor Inaba N16961) protein is 23S rRNA (guanosine-2'-O-)-methyltransferase RlmB.